The chain runs to 76 residues: Putative defensin-like protein 62 (76 aa).

A signal peptide spans 1-26 (MDVTKTYVTIFVVAILTISVLIQIQQ). 4 disulfides stabilise this stretch: Cys-30-Cys-71, Cys-34-Cys-57, Cys-43-Cys-69, and Cys-47-Cys-70.

Belongs to the DEFL family.

It is found in the secreted. The chain is Putative defensin-like protein 62 from Arabidopsis thaliana (Mouse-ear cress).